A 310-amino-acid polypeptide reads, in one-letter code: Aspartate carbamoyltransferase catalytic subunit (310 aa).

Arg-58 and Thr-59 together coordinate carbamoyl phosphate. L-aspartate is bound at residue Lys-86. Arg-108, His-136, and Gln-139 together coordinate carbamoyl phosphate. L-aspartate is bound by residues Arg-169 and Arg-224. Residues Gly-265 and Pro-266 each coordinate carbamoyl phosphate.

The protein belongs to the aspartate/ornithine carbamoyltransferase superfamily. ATCase family. As to quaternary structure, heterododecamer (2C3:3R2) of six catalytic PyrB chains organized as two trimers (C3), and six regulatory PyrI chains organized as three dimers (R2).

It carries out the reaction carbamoyl phosphate + L-aspartate = N-carbamoyl-L-aspartate + phosphate + H(+). Its pathway is pyrimidine metabolism; UMP biosynthesis via de novo pathway; (S)-dihydroorotate from bicarbonate: step 2/3. Functionally, catalyzes the condensation of carbamoyl phosphate and aspartate to form carbamoyl aspartate and inorganic phosphate, the committed step in the de novo pyrimidine nucleotide biosynthesis pathway. The sequence is that of Aspartate carbamoyltransferase catalytic subunit from Trichlorobacter lovleyi (strain ATCC BAA-1151 / DSM 17278 / SZ) (Geobacter lovleyi).